Consider the following 396-residue polypeptide: Phosphoglycerate kinase (396 aa).

Substrate is bound by residues aspartate 21–asparagine 23, arginine 36, histidine 59–arginine 62, arginine 118, and arginine 151. ATP is bound by residues lysine 201, glycine 292, glutamate 323, and glycine 349–serine 352.

This sequence belongs to the phosphoglycerate kinase family. In terms of assembly, monomer.

Its subcellular location is the cytoplasm. It catalyses the reaction (2R)-3-phosphoglycerate + ATP = (2R)-3-phospho-glyceroyl phosphate + ADP. It functions in the pathway carbohydrate degradation; glycolysis; pyruvate from D-glyceraldehyde 3-phosphate: step 2/5. This is Phosphoglycerate kinase from Leptospira biflexa serovar Patoc (strain Patoc 1 / Ames).